Consider the following 289-residue polypeptide: ATP synthase subunit a (289 aa).

Transmembrane regions (helical) follow at residues 43-63 (AFHVDTLGWSVALGLIFVLIF), 101-121 (SAVIAPLALTIFVWVFLMNAV), 160-180 (LSVFALIIFYSIKVKGIGGFI), 193-213 (LFVQALLIPVNFLLEFVTLIA), 232-252 (VFILIAVMFGSGLLWLSGLGV), and 259-279 (AVFHILIITLQAFIFMMLTIV).

It belongs to the ATPase A chain family. As to quaternary structure, F-type ATPases have 2 components, CF(1) - the catalytic core - and CF(0) - the membrane proton channel. CF(1) has five subunits: alpha(3), beta(3), gamma(1), delta(1), epsilon(1). CF(0) has three main subunits: a(1), b(2) and c(9-12). The alpha and beta chains form an alternating ring which encloses part of the gamma chain. CF(1) is attached to CF(0) by a central stalk formed by the gamma and epsilon chains, while a peripheral stalk is formed by the delta and b chains.

Its subcellular location is the cell inner membrane. Key component of the proton channel; it plays a direct role in the translocation of protons across the membrane. This is ATP synthase subunit a from Pseudomonas syringae pv. syringae (strain B728a).